The following is a 1009-amino-acid chain: Translation initiation factor IF-2 (1009 aa).

The segment at 1-415 (MSDENENGRP…EREKEKRRGG (415 aa)) is disordered. Residues 94–110 (EELRARQRVVDAAREAQ) show a composition bias toward basic and acidic residues. The span at 111–121 (ARQVAEQAAAE) shows a compositional bias: low complexity. The span at 122-136 (ARARAAQEAAQREAA) shows a compositional bias: basic and acidic residues. Residues 137–146 (AKAAAERAAA) are compositionally biased toward low complexity. The segment covering 147-174 (APPPVAQAPAAPAPAAPVTPPPAAPQAP) has biased composition (pro residues). Low complexity predominate over residues 175–189 (RPVAQAPVAPSAPRQ). Composition is skewed to basic and acidic residues over residues 208-218 (EPSRDRRDDRP) and 251-287 (PRPEGDRPRGPRPDGDRPQGDRGGYRGDRPQGDRPQG). Positions 311 to 320 (GGPPRGPRPG) are enriched in pro residues. Composition is skewed to basic and acidic residues over residues 346-358 (MDRRPDEDDDRRK) and 403-415 (RAREREKEKRRGG). Residues 505–675 (LRPPVVTIMG…LLQAEVLDLK (171 aa)) enclose the tr-type G domain. Residues 514–521 (GHVDHGKT) are G1. 514-521 (GHVDHGKT) is a binding site for GTP. The G2 stretch occupies residues 539-543 (GITQH). Residues 561–564 (DTPG) form a G3 region. GTP-binding positions include 561–565 (DTPGH) and 615–618 (NKMD). The G4 stretch occupies residues 615–618 (NKMD). The tract at residues 651–653 (SAK) is G5.

This sequence belongs to the TRAFAC class translation factor GTPase superfamily. Classic translation factor GTPase family. IF-2 subfamily.

It localises to the cytoplasm. Its function is as follows. One of the essential components for the initiation of protein synthesis. Protects formylmethionyl-tRNA from spontaneous hydrolysis and promotes its binding to the 30S ribosomal subunits. Also involved in the hydrolysis of GTP during the formation of the 70S ribosomal complex. The polypeptide is Translation initiation factor IF-2 (Caulobacter vibrioides (strain ATCC 19089 / CIP 103742 / CB 15) (Caulobacter crescentus)).